Reading from the N-terminus, the 249-residue chain is 5'-nucleotidase SurE (249 aa).

Residues Asp9, Asp10, Ser40, and Asn92 each coordinate a divalent metal cation.

Belongs to the SurE nucleotidase family. It depends on a divalent metal cation as a cofactor.

Its subcellular location is the cytoplasm. The enzyme catalyses a ribonucleoside 5'-phosphate + H2O = a ribonucleoside + phosphate. Functionally, nucleotidase that shows phosphatase activity on nucleoside 5'-monophosphates. This Shewanella loihica (strain ATCC BAA-1088 / PV-4) protein is 5'-nucleotidase SurE.